A 146-amino-acid polypeptide reads, in one-letter code: Outer envelope pore protein 16, chloroplastic (146 aa).

The interval 1–73 (MPRSSFSGSL…EKSLKKMCKE (73 aa)) is contains 4 beta strands. 3 consecutive transmembrane segments (helical) span residues 75–91 (AYWG…EYGV), 103–119 (AMFG…AASN), and 128–146 (DAIT…NYLT).

It belongs to the Tim17/Tim22/Tim23 family. Plastid outer envelope porin OEP16 (TC 1.B.30) subfamily. As to quaternary structure, homodimer and oligomers in membrane.

The protein localises to the plastid. It localises to the chloroplast outer membrane. The protein resides in the etioplast membrane. Functionally, voltage-dependent high-conductance channel with a slight cation-selectivity; selective for amino acids but excludes triosephosphates or uncharged sugars. Non-essential amino acid-selective channel protein and translocation pore for NADPH:protochlorophyllide oxidoreductase A (PORA) and possibly PORB. The chain is Outer envelope pore protein 16, chloroplastic (OEP16) from Pisum sativum (Garden pea).